A 76-amino-acid chain; its full sequence is uORF2 protein (76 aa).

In terms of biological role, plays a role in viral replication. The protein is uORF2 protein of Zika virus (isolate ZIKV/Human/French Polynesia/10087PF/2013) (ZIKV).